Reading from the N-terminus, the 164-residue chain is Glutamate uptake regulatory protein (164 aa).

The region spanning 5–66 (LDDFDIKILD…LLDPQKIGLG (62 aa)) is the HTH asnC-type domain. A DNA-binding region (H-T-H motif) is located at residues 24 to 43 (MAELSEKTGLSANACWRRIR).

In terms of biological role, represses the secondary, H(+)-coupled glutamate uptake system (Gluemp) genes. The chain is Glutamate uptake regulatory protein (grp) from Zymomonas mobilis subsp. mobilis (strain ATCC 31821 / ZM4 / CP4).